Here is a 211-residue protein sequence, read N- to C-terminus: Peroxiredoxin (211 aa).

Residues 2–156 (PLIGDKFPEM…IVRMIRAFRV (155 aa)) enclose the Thioredoxin domain. The Cysteine sulfenic acid (-SOH) intermediate role is filled by C44. R119 is a substrate binding site. C198 and C204 are oxidised to a cystine.

It belongs to the peroxiredoxin family. Prx6 subfamily. As to quaternary structure, homodecamer. Pentamer of dimers that assemble into a ring structure.

The protein localises to the cytoplasm. The enzyme catalyses a hydroperoxide + [thioredoxin]-dithiol = an alcohol + [thioredoxin]-disulfide + H2O. Its function is as follows. Thiol-specific peroxidase that catalyzes the reduction of hydrogen peroxide and organic hydroperoxides to water and alcohols, respectively. Plays a role in cell protection against oxidative stress by detoxifying peroxides. This chain is Peroxiredoxin, found in Methanothermobacter marburgensis (strain ATCC BAA-927 / DSM 2133 / JCM 14651 / NBRC 100331 / OCM 82 / Marburg) (Methanobacterium thermoautotrophicum).